Here is a 435-residue protein sequence, read N- to C-terminus: Endosome-associated-trafficking regulator 1 (435 aa).

2 positions are modified to phosphoserine: Ser18 and Ser147. Disordered regions lie at residues 136–185 and 225–251; these read ASRH…TGWS and ESLP…PSAD. Acidic residues predominate over residues 173–182; sequence LLDEEEDEDT. The interval 173–198 is required for interaction with PTPN13; it reads LLDEEEDEDTGWSGAYLPSAIEQTHP. Over residues 240-250 the composition is skewed to low complexity; sequence SPASPAGSPSA. Residues Ser243 and Ser247 each carry the phosphoserine modification. Residues 261-371 adopt a coiled-coil conformation; the sequence is DRHLRTLQIS…FQRENEALRC (111 aa).

This sequence belongs to the ENTR1 family. Found in a complex with ENTR1, PTPN13 and GIT1. Interacts with PTPN13 (via the FERM domain). Interacts (via N-terminus) with GIT1 (via N- and C-terminus); this interaction is direct. Interacts with NOD2. Interacts (via N-terminus) with IFT88. Interacts with VPS35. Post-translationally, phosphorylated. Expressed in the colon (at protein level).

It localises to the cytoplasm. Its subcellular location is the early endosome. The protein localises to the endosome. It is found in the recycling endosome. The protein resides in the midbody. It localises to the cytoskeleton. Its subcellular location is the microtubule organizing center. The protein localises to the centrosome. It is found in the cilium basal body. Functionally, endosome-associated protein that plays a role in membrane receptor sorting, cytokinesis and ciliogenesis. Involved in the endosome-to-plasma membrane trafficking and recycling of SNX27-retromer-dependent cargo proteins, such as GLUT1. Involved in the regulation of cytokinesis; the function may involve PTPN13 and GIT1. Plays a role in the formation of cilia. Involved in cargo protein localization, such as PKD2, at primary cilia. Involved in the presentation of the tumor necrosis factor (TNF) receptor TNFRSF1A on the cell surface, and hence in the modulation of the TNF-induced apoptosis. The protein is Endosome-associated-trafficking regulator 1 of Homo sapiens (Human).